A 425-amino-acid chain; its full sequence is MAGAEGAAGRQSELEPVVSLVDVLEEDEELENEACAVLGGSDSEKCSYSQGSVKRQALYACSTCTPEGEEPAGICLACSYECHGSHKLFELYTKRNFRCDCGNSKFKNLECKLLPDKAKVNSGNKYNDNFFGLYCICKRPYPDPEDEIPDEMIQCVVCEDWFHGRHLGAIPPESGDFQEMVCQACMKRCSFLWAYAAQLAVTKISTEDDGLVRNIDGIGDQEVIKPENGEHQDSTLKEDVPEQGKDDVREVKVEQNSEPCAGSSSESDLQTVFKNESLNAESKSGCKLQELKAKQLIKKDTATYWPLNWRSKLCTCQDCMKMYGDLDVLFLTDEYDTVLAYENKGKIAQATDRSDPLMDTLSSMNRVQQVELICEYNDLKTELKDYLKRFADEGTVVKREDIQQFFEEFQSKKRRRVDGMQYYCS.

The UBR-type zinc finger occupies 44–116; it reads EKCSYSQGSV…KNLECKLLPD (73 aa). Residues 132 to 188 form a PHD-type; atypical zinc finger; the sequence is GLYCICKRPYPDPEDEIPDEMIQCVVCEDWFHGRHLGAIPPESGDFQEMVCQACMKR. Residues K225 and K252 each participate in a glycyl lysine isopeptide (Lys-Gly) (interchain with G-Cter in SUMO2) cross-link. The segment at 225–246 is disordered; it reads KPENGEHQDSTLKEDVPEQGKD. S264 carries the phosphoserine modification. A Glycyl lysine isopeptide (Lys-Gly) (interchain with G-Cter in SUMO2) cross-link involves residue K274. At S354 the chain carries Phosphoserine. Residue K398 forms a Glycyl lysine isopeptide (Lys-Gly) (interchain with G-Cter in SUMO2) linkage.

As to expression, expressed in sperm (at protein level).

It catalyses the reaction S-ubiquitinyl-[E2 ubiquitin-conjugating enzyme]-L-cysteine + [acceptor protein]-L-lysine = [E2 ubiquitin-conjugating enzyme]-L-cysteine + N(6)-ubiquitinyl-[acceptor protein]-L-lysine.. Its pathway is protein modification; protein ubiquitination. E3 ubiquitin-protein ligase which is a component of the N-end rule pathway. Recognizes and binds to proteins bearing specific N-terminal residues that are destabilizing according to the N-end rule, leading to their ubiquitination and subsequent degradation. The polypeptide is Putative E3 ubiquitin-protein ligase UBR7 (UBR7) (Homo sapiens (Human)).